The chain runs to 183 residues: Non-classical export protein 2 homolog (183 aa).

The Cytoplasmic portion of the chain corresponds to 1-8 (MVGIRQYG). A helical transmembrane segment spans residues 9-29 (VFTWVFRTFQLAIDTIVLALA). Topologically, residues 30-44 (SALVNQQTSGGSPGK) are extracellular. Residues 45 to 65 (INFSVAVGSFAILTFFLTAVG) traverse the membrane as a helical segment. Residues 66–75 (RFLPTILGNP) are Cytoplasmic-facing. The chain crosses the membrane as a helical span at residues 76-96 (WLIAFYDFVNWVFALTGGCCI). At 97–131 (AVAIRVHACDNQKYLDRNHYTQGSMRRCQELKALC) the chain is on the extracellular side. The helical transmembrane segment at 132 to 152 (FFLWFMFGLYVASFIVQIFIA) threads the bilayer. The Cytoplasmic portion of the chain corresponds to 153–183 (KNDTPNYTFRGRGRGKGSGPAVAPRPVMSAV). The tract at residues 163–183 (GRGRGKGSGPAVAPRPVMSAV) is disordered.

It belongs to the NCE102 family.

The protein localises to the cytoplasm. The protein resides in the golgi apparatus membrane. It localises to the cell membrane. Functionally, involved in membrane organization and might act as a sensor of sphingolipids that regulates plasma membrane function. Involved in a novel pathway of export of proteins that lack a cleavable signal sequence. The sequence is that of Non-classical export protein 2 homolog (fhn1) from Schizosaccharomyces pombe (strain 972 / ATCC 24843) (Fission yeast).